The sequence spans 457 residues: MDHLPIFCQLRDRDCLIVGGGDVAERKARLLLDAGARLTVNALAFIPQFTAWADAGMLTLVEGPFDESLLDTCWLAIAATDDDALNQRVSEAAEARRIFCNVVDAPKAASFIMPSIIDRSPLMVAVSSGGTSPVLARLLREKLESLLPLHLGQVAKYAGQLRGRVKQQFATMGERRRFWEKLFVNDRLAQSLANNDQKAITETTEQLINEPLDHRGEVVLVGAGPGDAGLLTLKGLQQIQQADVVVYDRLVSDDIMNLVRRDADRVFVGKRAGYHCVPQEEINQILLREAQKGKRVVRLKGGDPFIFGRGGEELETLCNAGIPFSVVPGITAASGCSAYSGIPLTHRDYAQSVRLITGHLKTGGELDWENLAAEKQTLVFYMGLNQAATIQQKLIEHDMPGEMPVAIVENGTAVTQRVIDGTLTQLGKLAQQMNSPSLIIIGRVVGLRDKLNWFSNH.

A precorrin-2 dehydrogenase /sirohydrochlorin ferrochelatase region spans residues Met1–Thr204. NAD(+)-binding positions include Asp22–Val23 and Leu43–Ala44. Position 128 is a phosphoserine (Ser128). Positions Gly216–His457 are uroporphyrinogen-III C-methyltransferase. Position 225 (Pro225) interacts with S-adenosyl-L-methionine. The Proton acceptor role is filled by Asp248. Lys270 functions as the Proton donor in the catalytic mechanism. S-adenosyl-L-methionine is bound by residues Gly301–Asp303, Ile306, Thr331–Ala332, Met382, and Gly411.

It in the N-terminal section; belongs to the precorrin-2 dehydrogenase / sirohydrochlorin ferrochelatase family. In the C-terminal section; belongs to the precorrin methyltransferase family.

It carries out the reaction uroporphyrinogen III + 2 S-adenosyl-L-methionine = precorrin-2 + 2 S-adenosyl-L-homocysteine + H(+). The enzyme catalyses precorrin-2 + NAD(+) = sirohydrochlorin + NADH + 2 H(+). It catalyses the reaction siroheme + 2 H(+) = sirohydrochlorin + Fe(2+). It functions in the pathway cofactor biosynthesis; adenosylcobalamin biosynthesis; precorrin-2 from uroporphyrinogen III: step 1/1. The protein operates within cofactor biosynthesis; adenosylcobalamin biosynthesis; sirohydrochlorin from precorrin-2: step 1/1. It participates in porphyrin-containing compound metabolism; siroheme biosynthesis; precorrin-2 from uroporphyrinogen III: step 1/1. Its pathway is porphyrin-containing compound metabolism; siroheme biosynthesis; siroheme from sirohydrochlorin: step 1/1. It functions in the pathway porphyrin-containing compound metabolism; siroheme biosynthesis; sirohydrochlorin from precorrin-2: step 1/1. Functionally, multifunctional enzyme that catalyzes the SAM-dependent methylations of uroporphyrinogen III at position C-2 and C-7 to form precorrin-2 via precorrin-1. Then it catalyzes the NAD-dependent ring dehydrogenation of precorrin-2 to yield sirohydrochlorin. Finally, it catalyzes the ferrochelation of sirohydrochlorin to yield siroheme. This chain is Siroheme synthase, found in Shigella dysenteriae serotype 1 (strain Sd197).